Consider the following 652-residue polypeptide: WD repeat-containing protein 70 (652 aa).

Disordered regions lie at residues 1 to 22 (MERP…LAVT) and 45 to 171 (RRTA…IPDS). The segment covering 45 to 76 (RRTAVERSRKTLEAREREEEMNREKELRRQNE) has biased composition (basic and acidic residues). Residues 92 to 102 (SKSSSRDTSSS) show a composition bias toward low complexity. Acidic residues-rich tracts occupy residues 103-115 (ESDE…DDEL) and 146-162 (EDVE…EEEE). 7 WD repeats span residues 178–217 (HGTK…ASFK), 225–266 (CECH…ECIK), 279–319 (GHTA…KQKS), 328–367 (GKKV…HPKF), 374–413 (DPGT…KPLF), 419–464 (PTMF…RVYE), and 467–506 (ITDA…QRGA). Residue Lys294 forms a Glycyl lysine isopeptide (Lys-Gly) (interchain with G-Cter in SUMO2) linkage. Lys450 is modified (N6-acetyllysine). Positions 538-563 (REPRQRSTRKQLEKDRLDPLKSHKPE) are enriched in basic and acidic residues. A disordered region spans residues 538 to 577 (REPRQRSTRKQLEKDRLDPLKSHKPEPPVAGPGRGGRVGT). Position 577 is a phosphothreonine (Thr577). Glycyl lysine isopeptide (Lys-Gly) (interchain with G-Cter in SUMO2) cross-links involve residues Lys588 and Lys594. Residues Ser619 and Ser636 each carry the phosphoserine modification. Positions 629-652 (TMFAQVESDDEETKNEPEWKKRKI) are disordered. Over residues 642-652 (KNEPEWKKRKI) the composition is skewed to basic and acidic residues.

This sequence belongs to the WD repeat GAD-1 family.

This chain is WD repeat-containing protein 70 (WDR70), found in Bos taurus (Bovine).